Reading from the N-terminus, the 224-residue chain is Pyridoxine/pyridoxamine 5'-phosphate oxidase (224 aa).

FMN contacts are provided by residues 69 to 74, 83 to 84, Arg89, Lys90, and Gln112; these read RHVLLK and FT. Lys74 provides a ligand contact to substrate. Positions 130, 134, and 138 each coordinate substrate. Residues 148-149 and Trp194 each bind FMN; that span reads QS. 200-202 contacts substrate; the sequence is RMH. Position 204 (Arg204) interacts with FMN.

The protein belongs to the pyridoxamine 5'-phosphate oxidase family. Homodimer. It depends on FMN as a cofactor.

The enzyme catalyses pyridoxamine 5'-phosphate + O2 + H2O = pyridoxal 5'-phosphate + H2O2 + NH4(+). The catalysed reaction is pyridoxine 5'-phosphate + O2 = pyridoxal 5'-phosphate + H2O2. Its pathway is cofactor metabolism; pyridoxal 5'-phosphate salvage; pyridoxal 5'-phosphate from pyridoxamine 5'-phosphate: step 1/1. It participates in cofactor metabolism; pyridoxal 5'-phosphate salvage; pyridoxal 5'-phosphate from pyridoxine 5'-phosphate: step 1/1. Its function is as follows. Catalyzes the oxidation of either pyridoxine 5'-phosphate (PNP) or pyridoxamine 5'-phosphate (PMP) into pyridoxal 5'-phosphate (PLP). The polypeptide is Pyridoxine/pyridoxamine 5'-phosphate oxidase (Acidothermus cellulolyticus (strain ATCC 43068 / DSM 8971 / 11B)).